The sequence spans 274 residues: Serine protease 28 (274 aa).

Positions 1–26 (MFRLLLLALSCLESTVFMASVSISRS) are cleaved as a signal peptide. The Peptidase S1 domain maps to 31–274 (IVGGQRTPPG…SLAWIHQHIQ (244 aa)). A disulfide bridge links C62 with C78. The Charge relay system role is filled by H77. The N-linked (GlcNAc...) asparagine glycan is linked to N106. The active-site Charge relay system is D124. 3 disulfides stabilise this stretch: C158–C233, C191–C214, and C223–C251. Residue S227 is the Charge relay system of the active site.

The protein belongs to the peptidase S1 family. In terms of assembly, homooligomer, heterodimer and heterotetramer. Able to form homo- and hetero- tetrameric structures. Heterotetramer is far more stable than the homotetramer. Expressed in embryos throughout the preimplantation period, during blastocyst hatching and embryo outgrowth. Found in uterus especially in glandular epithelium.

The protein localises to the secreted. Its activity is regulated as follows. Inhibited by benzamidine, (4-amidino-phenyl)-methane-sulfonyl (APMSF), N-p-tosyl-L-lysine chloromethylketone (TLCK), gabexate, mesylate, BABIM and trypsin soybean inhibitor (TSI). Its function is as follows. Involved in embryo hatching and implantation. This is Serine protease 28 (Prss28) from Mus musculus (Mouse).